The following is a 141-amino-acid chain: Nucleoside diphosphate kinase (141 aa).

ATP is bound by residues K11, F59, R87, T93, R104, and N114. H117 functions as the Pros-phosphohistidine intermediate in the catalytic mechanism.

Belongs to the NDK family. As to quaternary structure, homotetramer. Requires Mg(2+) as cofactor.

The protein resides in the cytoplasm. The catalysed reaction is a 2'-deoxyribonucleoside 5'-diphosphate + ATP = a 2'-deoxyribonucleoside 5'-triphosphate + ADP. The enzyme catalyses a ribonucleoside 5'-diphosphate + ATP = a ribonucleoside 5'-triphosphate + ADP. In terms of biological role, major role in the synthesis of nucleoside triphosphates other than ATP. The ATP gamma phosphate is transferred to the NDP beta phosphate via a ping-pong mechanism, using a phosphorylated active-site intermediate. This chain is Nucleoside diphosphate kinase, found in Burkholderia cenocepacia (strain HI2424).